A 201-amino-acid chain; its full sequence is Recombination protein RecR (201 aa).

The C4-type zinc-finger motif lies at 57–72 (CCDCRTFTEEERCTIC). Residues 81–176 (GQICVVESPA…AASRIAHGVP (96 aa)) enclose the Toprim domain.

This sequence belongs to the RecR family.

In terms of biological role, may play a role in DNA repair. It seems to be involved in an RecBC-independent recombinational process of DNA repair. It may act with RecF and RecO. The chain is Recombination protein RecR from Proteus mirabilis (strain HI4320).